We begin with the raw amino-acid sequence, 71 residues long: UPF0346 protein Sez_1447 (71 aa).

It belongs to the UPF0346 family.

This is UPF0346 protein Sez_1447 from Streptococcus equi subsp. zooepidemicus (strain MGCS10565).